The sequence spans 137 residues: Large ribosomal subunit protein uL16 (137 aa).

Belongs to the universal ribosomal protein uL16 family. As to quaternary structure, part of the 50S ribosomal subunit.

Binds 23S rRNA and is also seen to make contacts with the A and possibly P site tRNAs. This is Large ribosomal subunit protein uL16 from Acinetobacter baumannii (strain SDF).